The primary structure comprises 89 residues: Small ribosomal subunit protein uS15 (89 aa).

Over residues 1-16 the composition is skewed to basic and acidic residues; the sequence is MSVADIKKQDIVKDNG. The disordered stretch occupies residues 1-24; the sequence is MSVADIKKQDIVKDNGRSANDTGS.

This sequence belongs to the universal ribosomal protein uS15 family. In terms of assembly, part of the 30S ribosomal subunit. Forms a bridge to the 50S subunit in the 70S ribosome, contacting the 23S rRNA.

Its function is as follows. One of the primary rRNA binding proteins, it binds directly to 16S rRNA where it helps nucleate assembly of the platform of the 30S subunit by binding and bridging several RNA helices of the 16S rRNA. Forms an intersubunit bridge (bridge B4) with the 23S rRNA of the 50S subunit in the ribosome. The chain is Small ribosomal subunit protein uS15 from Ralstonia pickettii (strain 12J).